Reading from the N-terminus, the 106-residue chain is Circadian clock oscillator protein KaiB (106 aa).

This sequence belongs to the KaiB family. The KaiABC complex composition changes during the circadian cycle to control KaiC phosphorylation. Complexes KaiC(6), KaiA(2-4):KaiC(6), KaiB(6):KaiC(6) and KaiC(6):KaiB(6):KaiA(12) are among the most important forms, many form cooperatively. Undergoes a major conformational rearrangment; in the free state forms homotetramers as a dimer of dimers. When bound to the CI domain of KaiC switches to a monomeric thioredoxin-fold (KaiB(fs)). KaiB(fs) binds CikA, leading it to dephosphorylate phospho-RpaA.

Key component of the KaiABC oscillator complex, which constitutes the main circadian regulator in cyanobacteria. Complex composition changes during the circadian cycle to control KaiC phosphorylation. KaiA stimulates KaiC autophosphorylation, while KaiB sequesters KaiA, leading to KaiC autodephosphorylation. Phospho-Ser-431 KaiC accumulation triggers binding of KaiB to form the KaiB(6):KaiC(6) complex, leading to changes in output regulators CikA and SasA. KaiB switches to a thioredoxin-like fold (KaiB(fs)) when bound to KaiC. KaiB(6):KaiC(6) formation exposes a site for KaiA binding that sequesters KaiA from KaiC, making the KaiC(6):KaiB(6):KaiA(12) complex that results in KaiC autodephosphorylation. Its function is as follows. A metamorphic protein which reversibly switches between an inactive tetrameric fold and a rare, thioredoxin-like monomeric fold (KaiB(fs)). KaiB(fs) binds phospho-KaiC, KaiA and CikA. KaiA and CikA compete for binding to KaiB(fs), and KaiB(fs) and SasA compete for binding to KaiC, thus the clock oscillator and output signal pathway are tightly coupled. This chain is Circadian clock oscillator protein KaiB, found in Gloeothece citriformis (strain PCC 7424) (Cyanothece sp. (strain PCC 7424)).